We begin with the raw amino-acid sequence, 113 residues long: Nitrogenase vanadium-iron protein delta chain (113 aa).

In terms of assembly, hexamer of two alpha, two beta, and two delta chains. It depends on iron-sulfur cluster as a cofactor. Vanadium cation serves as cofactor.

The catalysed reaction is N2 + 8 reduced [2Fe-2S]-[ferredoxin] + 16 ATP + 16 H2O = H2 + 8 oxidized [2Fe-2S]-[ferredoxin] + 2 NH4(+) + 16 ADP + 16 phosphate + 6 H(+). The key enzymatic reactions in nitrogen fixation are catalyzed by the nitrogenase complex, which has 2 components: the iron protein (component 2) and a component 1 which is either a molybdenum-iron protein, a vanadium-iron, or an iron-iron protein. The chain is Nitrogenase vanadium-iron protein delta chain (vnfG) from Azotobacter vinelandii.